The chain runs to 521 residues: Phospholipase C B (521 aa).

The segment at residues 1-39 (MGSEHPVDGMTRRQFFAKAAAATTAGAFMSLAGPIIEKA) is a signal peptide (tat-type signal). The interval 501-521 (FPQSMPTQETAPTRGIPSGLC) is disordered.

Belongs to the bacterial phospholipase C family. Predicted to be exported by the Tat system. The position of the signal peptide cleavage has not been experimentally proven.

It is found in the secreted. The protein resides in the cell wall. It carries out the reaction a 1,2-diacyl-sn-glycero-3-phosphocholine + H2O = phosphocholine + a 1,2-diacyl-sn-glycerol + H(+). Functionally, involved in virulence. Induces cytotoxic effects on mouse macrophage cell lines, via direct or indirect enzymatic hydrolysis of cell membrane phospholipids. Hydrolyzes phosphatidylcholine. In Mycobacterium tuberculosis (strain CDC 1551 / Oshkosh), this protein is Phospholipase C B.